The primary structure comprises 205 residues: Small ribosomal subunit protein uS4 (205 aa).

The disordered stretch occupies residues proline 26 to serine 46. The 64-residue stretch at arginine 94–valine 157 folds into the S4 RNA-binding domain.

It belongs to the universal ribosomal protein uS4 family. Part of the 30S ribosomal subunit. Contacts protein S5. The interaction surface between S4 and S5 is involved in control of translational fidelity.

One of the primary rRNA binding proteins, it binds directly to 16S rRNA where it nucleates assembly of the body of the 30S subunit. In terms of biological role, with S5 and S12 plays an important role in translational accuracy. This is Small ribosomal subunit protein uS4 from Gluconobacter oxydans (strain 621H) (Gluconobacter suboxydans).